A 219-amino-acid chain; its full sequence is Ribose-5-phosphate isomerase A (219 aa).

Residues 28–31 (SGST), 81–84 (DGAD), and 94–97 (KGGG) contribute to the substrate site. Residue glutamate 103 is the Proton acceptor of the active site. Residue lysine 121 participates in substrate binding.

It belongs to the ribose 5-phosphate isomerase family. As to quaternary structure, homodimer.

It carries out the reaction aldehydo-D-ribose 5-phosphate = D-ribulose 5-phosphate. It participates in carbohydrate degradation; pentose phosphate pathway; D-ribose 5-phosphate from D-ribulose 5-phosphate (non-oxidative stage): step 1/1. Functionally, catalyzes the reversible conversion of ribose-5-phosphate to ribulose 5-phosphate. In Actinobacillus pleuropneumoniae serotype 3 (strain JL03), this protein is Ribose-5-phosphate isomerase A.